Here is a 345-residue protein sequence, read N- to C-terminus: Uroporphyrinogen decarboxylase (345 aa).

Substrate is bound by residues 26-30 (RQAGR), D76, Y151, S205, and H321.

Belongs to the uroporphyrinogen decarboxylase family. As to quaternary structure, homodimer.

The protein resides in the cytoplasm. It catalyses the reaction uroporphyrinogen III + 4 H(+) = coproporphyrinogen III + 4 CO2. The protein operates within porphyrin-containing compound metabolism; protoporphyrin-IX biosynthesis; coproporphyrinogen-III from 5-aminolevulinate: step 4/4. Catalyzes the decarboxylation of four acetate groups of uroporphyrinogen-III to yield coproporphyrinogen-III. In Phenylobacterium zucineum (strain HLK1), this protein is Uroporphyrinogen decarboxylase.